The following is a 363-amino-acid chain: uncharacterized protein (363 aa).

This is an uncharacterized protein from Methanocaldococcus jannaschii (strain ATCC 43067 / DSM 2661 / JAL-1 / JCM 10045 / NBRC 100440) (Methanococcus jannaschii).